The following is a 931-amino-acid chain: Bifunctional uridylyltransferase/uridylyl-removing enzyme (931 aa).

A uridylyltransferase region spans residues 1–383 (MDLATTNDAA…RPGTELRRVP (383 aa)). Positions 384–739 (EGDDFIIDNN…VGFDEARGVT (356 aa)) are uridylyl-removing. An HD domain is found at 499–622 (VDEHLLRCIG…VQSVEQMKLL (124 aa)). 2 ACT domains span residues 740 to 822 (ELTI…VVAR) and 851 to 931 (VIEV…QSVG).

It belongs to the GlnD family. It depends on Mg(2+) as a cofactor.

The enzyme catalyses [protein-PII]-L-tyrosine + UTP = [protein-PII]-uridylyl-L-tyrosine + diphosphate. It catalyses the reaction [protein-PII]-uridylyl-L-tyrosine + H2O = [protein-PII]-L-tyrosine + UMP + H(+). Its activity is regulated as follows. Uridylyltransferase (UTase) activity is inhibited by glutamine, while glutamine activates uridylyl-removing (UR) activity. In terms of biological role, modifies, by uridylylation and deuridylylation, the PII regulatory proteins (GlnB and homologs), in response to the nitrogen status of the cell that GlnD senses through the glutamine level. Under low glutamine levels, catalyzes the conversion of the PII proteins and UTP to PII-UMP and PPi, while under higher glutamine levels, GlnD hydrolyzes PII-UMP to PII and UMP (deuridylylation). Thus, controls uridylylation state and activity of the PII proteins, and plays an important role in the regulation of nitrogen assimilation and metabolism. This Nitrobacter hamburgensis (strain DSM 10229 / NCIMB 13809 / X14) protein is Bifunctional uridylyltransferase/uridylyl-removing enzyme.